The primary structure comprises 264 residues: Tritrans,polycis-undecaprenyl-diphosphate synthase (geranylgeranyl-diphosphate specific) (264 aa).

Residue aspartate 43 is part of the active site. Position 43 (aspartate 43) interacts with Mg(2+). Substrate is bound by residues 44 to 47 (GNRR), tryptophan 48, histidine 60, and 88 to 90 (STE). Residue asparagine 91 is the Proton acceptor of the active site. Residues phenylalanine 92, arginine 94, arginine 213, and 219–221 (RIS) contribute to the substrate site. Glutamate 232 is a binding site for Mg(2+).

It belongs to the UPP synthase family. Homodimer. Mg(2+) is required as a cofactor.

It catalyses the reaction geranylgeranyl diphosphate + 7 isopentenyl diphosphate = tri-trans,hepta-cis-undecaprenyl diphosphate + 7 diphosphate. Catalyzes the sequential condensation of isopentenyl diphosphate (IPP) with geranylgeranyl diphosphate (GGPP) to yield (2Z,6Z,10Z,14Z,18Z,22Z,26Z,30E,34E,38E)-undecaprenyl diphosphate (tritrans,heptacis-UPP). It is probably the precursor of glycosyl carrier lipids. This chain is Tritrans,polycis-undecaprenyl-diphosphate synthase (geranylgeranyl-diphosphate specific), found in Pyrococcus furiosus (strain ATCC 43587 / DSM 3638 / JCM 8422 / Vc1).